A 120-amino-acid chain; its full sequence is Large ribosomal subunit protein bL19c (120 aa).

This sequence belongs to the bacterial ribosomal protein bL19 family.

It is found in the plastid. It localises to the chloroplast. The sequence is that of Large ribosomal subunit protein bL19c from Phaeodactylum tricornutum (strain CCAP 1055/1).